The following is a 142-amino-acid chain: Large ribosomal subunit protein uL11 (142 aa).

This sequence belongs to the universal ribosomal protein uL11 family. In terms of assembly, part of the ribosomal stalk of the 50S ribosomal subunit. Interacts with L10 and the large rRNA to form the base of the stalk. L10 forms an elongated spine to which L12 dimers bind in a sequential fashion forming a multimeric L10(L12)X complex. Post-translationally, one or more lysine residues are methylated.

Functionally, forms part of the ribosomal stalk which helps the ribosome interact with GTP-bound translation factors. This chain is Large ribosomal subunit protein uL11, found in Rhodopseudomonas palustris (strain HaA2).